Reading from the N-terminus, the 396-residue chain is MDEAGFRNFTVNFGPQHPAAHGVLRLVLELDGEVVERADPHIGLLHRGTEKLIEYRTYLQALPYFDRLDYVAPMNQEHAFCLAIEKLLQMPVPRRGQLIRVLFCEIGRLLSHLLNITTQALDIGALTPPLWGFEEREKLMVFYERASGARMHANYFRVGGVHQDLPEKLLDDIWNFCEPFLKVCNDLEELLSYNRIFKQRNVDVGVISLDEAWTRGFSGVMVRGSGAAWDLRKAQPYECYDELQFDIPVGKHGDCYDRYLIRMEEMRQSVRIMKQCLEKLSSVDGKGPIIEQNHKVTPPRRSEMKRSMEALIQHFKLYTEGHHVPAGEVYAAVEAPKGEFGVYLISDGSNIPYRCKIRAPSFAHLQAIDFLSHKHMLADVSAIIGSLDIVFGEIDR.

This sequence belongs to the complex I 49 kDa subunit family. In terms of assembly, NDH-1 is composed of 14 different subunits. Subunits NuoB, C, D, E, F, and G constitute the peripheral sector of the complex.

The protein localises to the cell inner membrane. It catalyses the reaction a quinone + NADH + 5 H(+)(in) = a quinol + NAD(+) + 4 H(+)(out). Functionally, NDH-1 shuttles electrons from NADH, via FMN and iron-sulfur (Fe-S) centers, to quinones in the respiratory chain. The immediate electron acceptor for the enzyme in this species is believed to be ubiquinone. Couples the redox reaction to proton translocation (for every two electrons transferred, four hydrogen ions are translocated across the cytoplasmic membrane), and thus conserves the redox energy in a proton gradient. This chain is NADH-quinone oxidoreductase subunit D 2, found in Beijerinckia indica subsp. indica (strain ATCC 9039 / DSM 1715 / NCIMB 8712).